The following is a 157-amino-acid chain: MATELSLSVQYGVADARLPRWRLRRWVQYALAGAAGDGHAGLAGAELGLRLVGLAEGRRLNREFRGRDYATNVLTFEYGTGPDGVARGDIVVCVPVLAREAREQRKTLLDHAAHLTVHGTLHALGYDHIKAGEARRMEALETAVLARMGIADPYLAA.

Zn(2+) is bound by residues H118, H122, and H128.

It belongs to the endoribonuclease YbeY family. Zn(2+) is required as a cofactor.

The protein resides in the cytoplasm. Functionally, single strand-specific metallo-endoribonuclease involved in late-stage 70S ribosome quality control and in maturation of the 3' terminus of the 16S rRNA. The sequence is that of Endoribonuclease YbeY from Bordetella bronchiseptica (strain ATCC BAA-588 / NCTC 13252 / RB50) (Alcaligenes bronchisepticus).